The primary structure comprises 318 residues: tRNA pseudouridine synthase B (318 aa).

The Nucleophile role is filled by Asp47.

The protein belongs to the pseudouridine synthase TruB family. Type 1 subfamily.

The enzyme catalyses uridine(55) in tRNA = pseudouridine(55) in tRNA. In terms of biological role, responsible for synthesis of pseudouridine from uracil-55 in the psi GC loop of transfer RNAs. This is tRNA pseudouridine synthase B from Colwellia psychrerythraea (strain 34H / ATCC BAA-681) (Vibrio psychroerythus).